A 394-amino-acid polypeptide reads, in one-letter code: MAKAKFERTKPHVNIGTIGHVDHGKTSLTAAITIVLAKTGGAQATAYDQIDAAPEEKERGITISTAHVEYETKNRHYAHVDCPGHADYVKNMITGAAQMDGAILVVSAADGPMPQTREHILLAKQVGVPAMVVFLNKVDMVDDPDLLELVEMEVRELLSKYGFPGDEIPIIKGSALQALEGKPEGEKAINELMDAVDSYIPQPVRATDKPFLMPIEDVFSISGRGTVVTGRVESGIIKVGEEIEIVGLKDTQKTTCTGVEMFRKLLDEGQAGDNIGVLLRGTKREEVERGQVLAKPGSIKPHDKFEAEVYVLSKEEGGRHTPFTNDYRPQFYFRTTDVTGTIKLPADKQMVMPGDNATFTVELIKPIAMQEGLKFSIREGGRTVGAGVVTKINN.

Residues 10 to 204 (KPHVNIGTIG…AVDSYIPQPV (195 aa)) form the tr-type G domain. Residues 19–26 (GHVDHGKT) are G1. 19 to 26 (GHVDHGKT) contributes to the GTP binding site. Thr26 provides a ligand contact to Mg(2+). Residues 60–64 (GITIS) are G2. The G3 stretch occupies residues 81–84 (DCPG). GTP is bound by residues 81–85 (DCPGH) and 136–139 (NKVD). Residues 136-139 (NKVD) are G4. The segment at 174–176 (SAL) is G5.

It belongs to the TRAFAC class translation factor GTPase superfamily. Classic translation factor GTPase family. EF-Tu/EF-1A subfamily. In terms of assembly, monomer.

It localises to the cytoplasm. The enzyme catalyses GTP + H2O = GDP + phosphate + H(+). Functionally, GTP hydrolase that promotes the GTP-dependent binding of aminoacyl-tRNA to the A-site of ribosomes during protein biosynthesis. This Rickettsia canadensis (strain McKiel) protein is Elongation factor Tu.